Reading from the N-terminus, the 455-residue chain is D-inositol 3-phosphate glycosyltransferase (455 aa).

Residues 1–25 (MSQHVSRLGGLRGRSHGHGAFGGPY) form a disordered region. Position 45 (H45) interacts with 1D-myo-inositol 3-phosphate. UDP-N-acetyl-alpha-D-glucosamine contacts are provided by residues 51–52 (QP) and G59. 1D-myo-inositol 3-phosphate-binding positions include 56–61 (DAGGMN), K114, Y147, T171, and R191. Residues R266 and K271 each coordinate UDP-N-acetyl-alpha-D-glucosamine. Y341, R342, and A344 together coordinate Mg(2+). Residues E354 and E362 each contribute to the UDP-N-acetyl-alpha-D-glucosamine site. T368 is a binding site for Mg(2+).

It belongs to the glycosyltransferase group 1 family. MshA subfamily. In terms of assembly, homodimer.

The enzyme catalyses 1D-myo-inositol 3-phosphate + UDP-N-acetyl-alpha-D-glucosamine = 1D-myo-inositol 2-acetamido-2-deoxy-alpha-D-glucopyranoside 3-phosphate + UDP + H(+). Catalyzes the transfer of a N-acetyl-glucosamine moiety to 1D-myo-inositol 3-phosphate to produce 1D-myo-inositol 2-acetamido-2-deoxy-glucopyranoside 3-phosphate in the mycothiol biosynthesis pathway. The polypeptide is D-inositol 3-phosphate glycosyltransferase (Streptomyces bingchenggensis (strain BCW-1)).